Consider the following 180-residue polypeptide: MFHATTILAYKGKNKSVIGGDGQVSFGNTVLKGNAVKIRKLNNGKVLAGFAGSTADAFNLFDMFENLLQSSKGDLLKAAIDFSKEWRKDKYLRKLEAMMLVLDRNHIFLLSGTGDVVEPEDGQIAAIGSGGNYALSAARALAKHASLDEEELVKSSLQIAGEICIYTNTNIKTYVIEDEK.

Threonine 5 is an active-site residue. Na(+)-binding residues include glycine 161, cysteine 164, and threonine 167.

Belongs to the peptidase T1B family. HslV subfamily. As to quaternary structure, a double ring-shaped homohexamer of HslV is capped on each side by a ring-shaped HslU homohexamer. The assembly of the HslU/HslV complex is dependent on binding of ATP.

The protein resides in the cytoplasm. The catalysed reaction is ATP-dependent cleavage of peptide bonds with broad specificity.. Its activity is regulated as follows. Allosterically activated by HslU binding. Its function is as follows. Protease subunit of a proteasome-like degradation complex believed to be a general protein degrading machinery. In Campylobacter jejuni subsp. jejuni serotype O:6 (strain 81116 / NCTC 11828), this protein is ATP-dependent protease subunit HslV.